Reading from the N-terminus, the 221-residue chain is H-2 class II histocompatibility antigen, A-Q alpha chain (221 aa).

The tract at residues 1-76 (GIVVYQSPGD…KRSNFTPATN (76 aa)) is alpha-1. The Extracellular segment spans residues 1–183 (GIVVYQSPGD…IPAPMSELTE (183 aa)). Positions 77 to 170 (EAPQATVFPK…GLDEPVLKHW (94 aa)) are alpha-2. Positions 79–171 (PQATVFPKSP…LDEPVLKHWE (93 aa)) constitute an Ig-like C1-type domain. A disulfide bridge links C99 with C155. Residue N110 is glycosylated (N-linked (GlcNAc...) asparagine). The connecting peptide stretch occupies residues 171–183 (EPEIPAPMSELTE). The helical transmembrane segment at 184–209 (TVVCALGLSVGLVGIVVGTIFIIQGL) threads the bilayer. The Cytoplasmic portion of the chain corresponds to 210 to 221 (RSGGTSRPPGPL).

This sequence belongs to the MHC class II family.

Its subcellular location is the membrane. In Mus musculus (Mouse), this protein is H-2 class II histocompatibility antigen, A-Q alpha chain (H2-Aa).